Here is a 592-residue protein sequence, read N- to C-terminus: Hepatocyte nuclear factor 1-alpha-B (592 aa).

A dimerization region spans residues 1–31 (MASQLSYLQQELLRALLESGVTKEALKKALA). One can recognise an HNF-p1 domain in the interval 1–32 (MASQLSYLQQELLRALLESGVTKEALKKALAD). The segment at 54–78 (NCVQLPNGLGEPQMSEDESSDDGGD) is disordered. Acidic residues predominate over residues 67-77 (MSEDESSDDGG). In terms of domain architecture, POU-specific atypical spans 85–180 (KELERLSPEE…IARQFTHAGH (96 aa)). 6 interaction with DNA regions span residues 128–130 (QRE), 141–147 (HLSQHLN), 153–156 (KTQK), 201–204 (RFKW), 261–263 (RVY), and 268–271 (NSGK). The short motif at 195-203 (KKMRRNRFK) is the Nuclear localization signal element. The segment at residues 197-277 (MRRNRFKWGP…NSGKEEAFRH (81 aa)) is a DNA-binding region (homeobox; HNF1-type). Polar residues-rich tracts occupy residues 284–295 (YNGQQSSAQPLS) and 306–328 (RYTQ…TLSP). Disordered regions lie at residues 284-329 (YNGQ…LSPS) and 511-533 (KQVV…HNQD).

It belongs to the HNF1 homeobox family. In terms of assembly, binds DNA as dimer. Forms a homodimer or heterodimer with HNF1-alpha-A. Potentially also form a heterodimer with HNF1-beta. As to expression, liver.

It localises to the nucleus. Its function is as follows. Transcriptional activator that regulates the tissue specific expression of multiple genes, especially in pancreas and liver. Binds to the hepatocyte specific promoter element HP1. Binds to the inverted palindrome 5'-GTTAATNATTAAC-3'. This chain is Hepatocyte nuclear factor 1-alpha-B (hnf1a-b), found in Xenopus laevis (African clawed frog).